The sequence spans 200 residues: GTP cyclohydrolase-2 (200 aa).

49-53 (RVHSE) lines the GTP pocket. C54, C65, and C67 together coordinate Zn(2+). GTP contacts are provided by residues Q70, 92–94 (EGR), and T114. D126 serves as the catalytic Proton acceptor. R128 acts as the Nucleophile in catalysis. Residues T149 and K154 each coordinate GTP.

The protein belongs to the GTP cyclohydrolase II family. In terms of assembly, homodimer. The cofactor is Zn(2+).

The catalysed reaction is GTP + 4 H2O = 2,5-diamino-6-hydroxy-4-(5-phosphoribosylamino)-pyrimidine + formate + 2 phosphate + 3 H(+). Its pathway is cofactor biosynthesis; riboflavin biosynthesis; 5-amino-6-(D-ribitylamino)uracil from GTP: step 1/4. Functionally, catalyzes the conversion of GTP to 2,5-diamino-6-ribosylamino-4(3H)-pyrimidinone 5'-phosphate (DARP), formate and pyrophosphate. The protein is GTP cyclohydrolase-2 of Klebsiella pneumoniae subsp. pneumoniae (strain ATCC 700721 / MGH 78578).